The primary structure comprises 114 residues: UPF0212 protein UNCMA_00570 (114 aa).

This sequence belongs to the UPF0212 family.

The chain is UPF0212 protein UNCMA_00570 from Methanocella arvoryzae (strain DSM 22066 / NBRC 105507 / MRE50).